Reading from the N-terminus, the 132-residue chain is Small ribosomal subunit protein uS8 (132 aa).

It belongs to the universal ribosomal protein uS8 family. As to quaternary structure, part of the 30S ribosomal subunit. Contacts proteins S5 and S12.

In terms of biological role, one of the primary rRNA binding proteins, it binds directly to 16S rRNA central domain where it helps coordinate assembly of the platform of the 30S subunit. The chain is Small ribosomal subunit protein uS8 from Thermoanaerobacter pseudethanolicus (strain ATCC 33223 / 39E) (Clostridium thermohydrosulfuricum).